Reading from the N-terminus, the 470-residue chain is Cell division protein FtsP (470 aa).

The segment at residues 1–27 (MSFSRRQFLQASGIALCAGAIPLRANA) is a signal peptide (tat-type signal). One can recognise a Plastocyanin-like domain in the interval 222 to 287 (VEVSRGWVRL…RREILVDMTN (66 aa)).

The protein belongs to the FtsP family. Predicted to be exported by the Tat system. The position of the signal peptide cleavage has not been experimentally proven.

The protein localises to the periplasm. Cell division protein that is required for growth during stress conditions. May be involved in protecting or stabilizing the divisomal assembly under conditions of stress. In Salmonella typhi, this protein is Cell division protein FtsP.